We begin with the raw amino-acid sequence, 231 residues long: RNA pyrophosphohydrolase (231 aa).

The region spanning 6 to 149 is the Nudix hydrolase domain; that stretch reads GFRPNVGIIL…KRDVYQLALT (144 aa). Residues 38-59 carry the Nudix box motif; sequence GGIKYGETPEQAMYRELHEEIG. Residues 168–200 are disordered; that stretch reads VHHGRHGSGQRYAQQPGQPPTLAQRRPLQPVTQ.

Belongs to the Nudix hydrolase family. RppH subfamily. A divalent metal cation serves as cofactor.

Accelerates the degradation of transcripts by removing pyrophosphate from the 5'-end of triphosphorylated RNA, leading to a more labile monophosphorylated state that can stimulate subsequent ribonuclease cleavage. The polypeptide is RNA pyrophosphohydrolase (Cupriavidus pinatubonensis (strain JMP 134 / LMG 1197) (Cupriavidus necator (strain JMP 134))).